Here is a 257-residue protein sequence, read N- to C-terminus: Thiazole synthase (257 aa).

Catalysis depends on lysine 96, which acts as the Schiff-base intermediate with DXP. 1-deoxy-D-xylulose 5-phosphate-binding positions include glycine 157, 184 to 185 (AG), and 206 to 207 (NT).

The protein belongs to the ThiG family. As to quaternary structure, homotetramer. Forms heterodimers with either ThiH or ThiS.

The protein resides in the cytoplasm. The enzyme catalyses [ThiS sulfur-carrier protein]-C-terminal-Gly-aminoethanethioate + 2-iminoacetate + 1-deoxy-D-xylulose 5-phosphate = [ThiS sulfur-carrier protein]-C-terminal Gly-Gly + 2-[(2R,5Z)-2-carboxy-4-methylthiazol-5(2H)-ylidene]ethyl phosphate + 2 H2O + H(+). It functions in the pathway cofactor biosynthesis; thiamine diphosphate biosynthesis. Its function is as follows. Catalyzes the rearrangement of 1-deoxy-D-xylulose 5-phosphate (DXP) to produce the thiazole phosphate moiety of thiamine. Sulfur is provided by the thiocarboxylate moiety of the carrier protein ThiS. In vitro, sulfur can be provided by H(2)S. The sequence is that of Thiazole synthase from Bartonella henselae (strain ATCC 49882 / DSM 28221 / CCUG 30454 / Houston 1) (Rochalimaea henselae).